The sequence spans 638 residues: Threonine--tRNA ligase (638 aa).

In terms of domain architecture, TGS spans 1 to 61 (MPNITLPDGS…EADTPLAIVT (61 aa)). Residues 242–533 (DHRKLGRLLD…LIEHYAGALP (292 aa)) form a catalytic region. Positions 333, 384, and 510 each coordinate Zn(2+).

Belongs to the class-II aminoacyl-tRNA synthetase family. In terms of assembly, homodimer. Requires Zn(2+) as cofactor.

The protein resides in the cytoplasm. It catalyses the reaction tRNA(Thr) + L-threonine + ATP = L-threonyl-tRNA(Thr) + AMP + diphosphate + H(+). Catalyzes the attachment of threonine to tRNA(Thr) in a two-step reaction: L-threonine is first activated by ATP to form Thr-AMP and then transferred to the acceptor end of tRNA(Thr). Also edits incorrectly charged L-seryl-tRNA(Thr). In Aromatoleum aromaticum (strain DSM 19018 / LMG 30748 / EbN1) (Azoarcus sp. (strain EbN1)), this protein is Threonine--tRNA ligase.